The chain runs to 261 residues: Proteasome assembly chaperone 2 (261 aa).

The protein belongs to the PSMG2 family. As to quaternary structure, forms a heterodimer with psmg1. Post-translationally, degraded by the proteasome upon completion of 20S proteasome maturation.

It localises to the nucleus. Its function is as follows. Chaperone protein which promotes assembly of the 20S proteasome as part of a heterodimer with psmg1. The polypeptide is Proteasome assembly chaperone 2 (Xenopus tropicalis (Western clawed frog)).